Here is a 593-residue protein sequence, read N- to C-terminus: MEPATAPRPDMAPELTPEEEQATKQFLEEINKWTVQYNVSPLSWNVAVKFLMARKFDVLRAVELFHCYRETRRKEGIVKLKPHEEPLRSEILSGKFTILNVRDPTGASIALFTARLHHPHKSVQHVVLQALFYLLDRAVDSFETQRNGLVFIYDMCGSNYANFELDLGKKVLNLLKGAFPARLKKVLIVGAPIWFRVPYSIISLLLKDKVRERIQILKTSEVTQHLPRECLPENLGGYIKIDLATWNFQFLPQVNGHPDPFDEIILFSLPPALDWDSVHVPGPHAMTIQELVDYVNTRQKQGIYEEYEDIRRENPVGTFHCSMSPGNLEKNRYGDVPCLDQTRVKLTKRSGHTQTDYINASFMDGYKQKNAYIGTQGPLENTYRDFWLMVWEQKVLVIVMTTRFEEGGRRKCGQYWPLEKDSRIQFGFLTVTNLGVENMNHYKKTTLEIHNTEERQKRQVTHFQFLSWPDYGVPSSAASLIDFLRVVRSQQSMAVGSLGARSKGQCPEPPIVVHCSAGIGRTGTFCSLDICLAQLEELGTLNVFQTVSRMRTQRAFSIQTPEQYYFCYKAILEFAEREGMVPSGHSLLAMDGQ.

At Met-1 the chain carries N-acetylmethionine. Positions 1 to 21 are disordered; sequence MEPATAPRPDMAPELTPEEEQ. Positions 84 to 243 constitute a CRAL-TRIO domain; the sequence is EEPLRSEILS…NLGGYIKIDL (160 aa). Positions 303-574 constitute a Tyrosine-protein phosphatase domain; sequence IYEEYEDIRR…YFCYKAILEF (272 aa). Substrate-binding positions include Asp-470, 515 to 521, and Gln-559; that span reads CSAGIGR. Residue Cys-515 is the Phosphocysteine intermediate of the active site.

This sequence belongs to the protein-tyrosine phosphatase family. Non-receptor class 3 subfamily.

The protein localises to the cytoplasm. It carries out the reaction O-phospho-L-tyrosyl-[protein] + H2O = L-tyrosyl-[protein] + phosphate. Protein-tyrosine phosphatase that could participate in the transfer of hydrophobic ligands or in functions of the Golgi apparatus. This chain is Tyrosine-protein phosphatase non-receptor type 9 (Ptpn9), found in Rattus norvegicus (Rat).